The following is a 609-amino-acid chain: Adagio protein 1 (609 aa).

Residues 1–17 show a composition bias toward low complexity; the sequence is MEWDSGSDLSADDASSL. A disordered region spans residues 1 to 24; it reads MEWDSGSDLSADDASSLADDEEGG. The region spanning 32-114 is the PAS domain; sequence IPYPVGNLLH…SEIRKCIDEG (83 aa). The residue at position 82 (cysteine 82) is an S-4a-FMN cysteine. Residues 118-161 enclose the PAC domain; sequence QGELLNFRKDGSPLMNRLRLTPIYGDDDTITHIIGIQFFIETDI. In terms of domain architecture, F-box spans 195 to 241; the sequence is CGLFQLSDEVVSMKILSRLTPRDVASVSSVCRRLYVLTKNEDLWRRV. 5 Kelch repeats span residues 292-342, 345-392, 397-445, 450-501, and 516-564; these read SRCN…SSPP, RWGH…SGLA, RSWH…PAAW, RLGH…TGSG, and RLDH…NIPG.

It belongs to the ADAGIO family. In terms of assembly, interacts with NFXL2. Interacts (via N-terminus) with GI and (via Kelch repeats) with ADO3. Component of an E3 ubiquitin ligase SCF(ADO1) complex composed of SKP1A/ASK1 (or SKP1B/ASK2), CUL1, RBX1 and ADO1. Also interacts with SKP1D/ASK4, SKP1K/ASK11, CRY1, PHYB, APRR1 and APRR5, and probably with SKP1N/ASK14 and SKP1S/ASK19. May be ubiquitinated. Degraded in a proteasome-dependent manner. In terms of processing, FMN binds covalently to cysteine after exposure to blue light and is reversed in the dark. Ubiquitously expressed with higher levels in cotyledons and leaves.

It is found in the nucleus. The protein resides in the cytoplasm. The protein operates within protein modification; protein ubiquitination. Functionally, component of an E3 ubiquitin ligase complex that plays a central role in blue light-dependent circadian cycles. Acts as a blue light photoreceptor, due to the presence of FMN, that mediates light-regulated protein degradation of critical clock components by targeting them to the proteasome complex. The SCF(ADO1) E3 ubiquitin ligase complex is involved in the regulation of circadian clock-dependent processes including the transition to flowering time, hypocotyl elongation, cotyledons and leaf movement rhythms. APRR1/TOC1 and APRR5, but not 'GIGANTEA', are proteolytic substrates of this ubiquitin ligase complex. Blue light enhances cooperative stabilization of 'GIGANTEA' and ADO1/ZTL, leading to amplification and sharpening of the expression profile of APRR1/TOC1. ADO1/ZTL interacts with ADO3, preventing the interaction of ADO3 with CDF1. The chain is Adagio protein 1 (ADO1) from Arabidopsis thaliana (Mouse-ear cress).